The following is a 265-amino-acid chain: Mlc titration factor A (265 aa).

Residues histidine 111, histidine 148, histidine 152, and glutamate 211 each coordinate Zn(2+).

It belongs to the MtfA family. In terms of assembly, monomer in solution. Interacts with Mlc. Requires Zn(2+) as cofactor.

It localises to the cytoplasm. Association between Mlc and MtfA may induce structural changes that activate the peptidase activity of MtfA while inactivating the DNA-binding ability of Mlc. The aminopeptidase activity is partially inhibited by metal chelators such as EDTA and phenantroline, but not by inhibitors for serine-, aspartyl-, or cysteine-proteases. Its function is as follows. Involved in the modulation of the activity of the glucose-phosphotransferase system (glucose-PTS). Interacts with the transcriptional repressor Mlc, preventing its interaction with DNA and leading to the modulation of expression of genes regulated by Mlc, including ptsG, which encodes the PTS system glucose-specific EIICB component. Functionally, shows zinc-dependent metallopeptidase activity. In vitro, can cleave several artificial substrates. The highest activity is observed for L-alanine fused to 4-nitroanilide (L-alanine-pNA). Shows lower activity towards proline-pNA and valine-pNA. This is Mlc titration factor A from Klebsiella pneumoniae subsp. pneumoniae (strain ATCC 700721 / MGH 78578).